A 191-amino-acid chain; its full sequence is Peptidyl-tRNA hydrolase (191 aa).

TRNA is bound at residue Y17. The active-site Proton acceptor is the H22. TRNA is bound by residues Y68, N70, and N116.

Belongs to the PTH family. In terms of assembly, monomer.

It localises to the cytoplasm. It catalyses the reaction an N-acyl-L-alpha-aminoacyl-tRNA + H2O = an N-acyl-L-amino acid + a tRNA + H(+). Its function is as follows. Hydrolyzes ribosome-free peptidyl-tRNAs (with 1 or more amino acids incorporated), which drop off the ribosome during protein synthesis, or as a result of ribosome stalling. Catalyzes the release of premature peptidyl moieties from peptidyl-tRNA molecules trapped in stalled 50S ribosomal subunits, and thus maintains levels of free tRNAs and 50S ribosomes. This chain is Peptidyl-tRNA hydrolase, found in Francisella tularensis subsp. tularensis (strain FSC 198).